The primary structure comprises 75 residues: Exodeoxyribonuclease 7 small subunit (75 aa).

The protein belongs to the XseB family. In terms of assembly, heterooligomer composed of large and small subunits.

It is found in the cytoplasm. It catalyses the reaction Exonucleolytic cleavage in either 5'- to 3'- or 3'- to 5'-direction to yield nucleoside 5'-phosphates.. Its function is as follows. Bidirectionally degrades single-stranded DNA into large acid-insoluble oligonucleotides, which are then degraded further into small acid-soluble oligonucleotides. This Citrifermentans bemidjiense (strain ATCC BAA-1014 / DSM 16622 / JCM 12645 / Bem) (Geobacter bemidjiensis) protein is Exodeoxyribonuclease 7 small subunit.